We begin with the raw amino-acid sequence, 361 residues long: Chorismate synthase (361 aa).

2 residues coordinate NADP(+): R48 and R54. FMN contacts are provided by residues 125-127 (RSS), 238-239 (NA), G278, 293-297 (KPTSS), and R319.

Belongs to the chorismate synthase family. Homotetramer. Requires FMNH2 as cofactor.

It carries out the reaction 5-O-(1-carboxyvinyl)-3-phosphoshikimate = chorismate + phosphate. The protein operates within metabolic intermediate biosynthesis; chorismate biosynthesis; chorismate from D-erythrose 4-phosphate and phosphoenolpyruvate: step 7/7. Functionally, catalyzes the anti-1,4-elimination of the C-3 phosphate and the C-6 proR hydrogen from 5-enolpyruvylshikimate-3-phosphate (EPSP) to yield chorismate, which is the branch point compound that serves as the starting substrate for the three terminal pathways of aromatic amino acid biosynthesis. This reaction introduces a second double bond into the aromatic ring system. This Methylobacillus flagellatus (strain ATCC 51484 / DSM 6875 / VKM B-1610 / KT) protein is Chorismate synthase.